Consider the following 286-residue polypeptide: Nucleotide-binding protein PLES_48441 (286 aa).

Residue 8–15 coordinates ATP; sequence GRSGSGKS. 60–63 serves as a coordination point for GTP; sequence DARN.

It belongs to the RapZ-like family.

In terms of biological role, displays ATPase and GTPase activities. This chain is Nucleotide-binding protein PLES_48441, found in Pseudomonas aeruginosa (strain LESB58).